Consider the following 193-residue polypeptide: MKKNLITSVLMTVVTTVLLGLVYPLLITGLAQVFFKDKANGQIISANGHAIGSRIIGQPFTGPAYFHSRPSAAGNGYDASNSGGTNLGPTNQKLVDRVKQDVSALQPEANGKPIPVDMITTSASGLDPHVTPANAEFQVARVARERGMSETQLRQLVARHTEGRQVGFLGEPRVNVLELNLDLDGTQPMPTPR.

Residues 9–29 (VLMTVVTTVLLGLVYPLLITG) form a helical membrane-spanning segment.

This sequence belongs to the KdpC family. As to quaternary structure, the system is composed of three essential subunits: KdpA, KdpB and KdpC.

The protein resides in the cell inner membrane. Its function is as follows. Part of the high-affinity ATP-driven potassium transport (or Kdp) system, which catalyzes the hydrolysis of ATP coupled with the electrogenic transport of potassium into the cytoplasm. This subunit acts as a catalytic chaperone that increases the ATP-binding affinity of the ATP-hydrolyzing subunit KdpB by the formation of a transient KdpB/KdpC/ATP ternary complex. The chain is Potassium-transporting ATPase KdpC subunit from Koribacter versatilis (strain Ellin345).